The primary structure comprises 160 residues: DNA topoisomerase small subunit (160 aa).

Part of the DNA topoisomerase complex made of gp39, gp52 and gp60. The cofactor is Mg(2+).

It catalyses the reaction ATP-dependent breakage, passage and rejoining of double-stranded DNA.. Functionally, small subunit of the DNA topoisomerase that untwists superhelical DNA. Controls topological states of double-stranded DNA by transient breakage and subsequent rejoining of DNA strands. The sequence is that of DNA topoisomerase small subunit (60) from Enterobacteria phage T4 (Bacteriophage T4).